The following is a 572-amino-acid chain: Proline--tRNA ligase (572 aa).

This sequence belongs to the class-II aminoacyl-tRNA synthetase family. ProS type 1 subfamily. In terms of assembly, homodimer. May form a tertiary complex with YbaK and t-RNA(Pro).

The protein resides in the cytoplasm. It carries out the reaction tRNA(Pro) + L-proline + ATP = L-prolyl-tRNA(Pro) + AMP + diphosphate. Its function is as follows. Catalyzes the attachment of proline to tRNA(Pro) in a two-step reaction: proline is first activated by ATP to form Pro-AMP and then transferred to the acceptor end of tRNA(Pro). As ProRS can inadvertently accommodate and process non-cognate amino acids such as alanine and cysteine, to avoid such errors it has two additional distinct editing activities against alanine. One activity is designated as 'pretransfer' editing and involves the tRNA(Pro)-independent hydrolysis of activated Ala-AMP. The other activity is designated 'posttransfer' editing and involves deacylation of mischarged Ala-tRNA(Pro). The misacylated Cys-tRNA(Pro) is not edited by ProRS, but is probably edited in trans by YbaK. The chain is Proline--tRNA ligase from Haemophilus influenzae (strain ATCC 51907 / DSM 11121 / KW20 / Rd).